The sequence spans 719 residues: Photosystem I P700 chlorophyll a apoprotein A1 (719 aa).

Transmembrane regions (helical) follow at residues 61–84 (VFSAHFGQLAIIFIWLSGMYFHGA), 147–170 (LYCTATGALIFAALMLFAGWFHYH), 186–210 (LNHHLAGLLGLGSLGWAGHQVHVSL), 282–300 (TAHHHLAIAILFLIAGHMY), 337–360 (WHAQLALNLAMLGSLTIVVAHHMY), 376–402 (LSLFTHHMWIGGFLIVGAAAHAAIFMV), 424–446 (AIVSHLNWACIFLGFHSFGLYIH), and 522–540 (FLVHHIHAFTIHVTVLILL). The [4Fe-4S] cluster site is built by cysteine 564 and cysteine 573. Helical transmembrane passes span 580-601 (HVFLGLFWMYNAISVVIFHFSW) and 655-677 (LSAYGLFFLGAHFVWAFSLMFLF). Histidine 666 is a binding site for chlorophyll a'. Chlorophyll a is bound by residues methionine 674 and tyrosine 682. Tryptophan 683 is a binding site for phylloquinone. A helical membrane pass occupies residues 715–719 (AVGVA).

It belongs to the PsaA/PsaB family. In terms of assembly, the PsaA/B heterodimer binds the P700 chlorophyll special pair and subsequent electron acceptors. PSI consists of a core antenna complex that captures photons, and an electron transfer chain that converts photonic excitation into a charge separation. The eukaryotic PSI reaction center is composed of at least 11 subunits. It depends on P700 is a chlorophyll a/chlorophyll a' dimer, A0 is one or more chlorophyll a, A1 is one or both phylloquinones and FX is a shared 4Fe-4S iron-sulfur center. as a cofactor.

It is found in the plastid. Its subcellular location is the chloroplast thylakoid membrane. The enzyme catalyses reduced [plastocyanin] + hnu + oxidized [2Fe-2S]-[ferredoxin] = oxidized [plastocyanin] + reduced [2Fe-2S]-[ferredoxin]. Its function is as follows. PsaA and PsaB bind P700, the primary electron donor of photosystem I (PSI), as well as the electron acceptors A0, A1 and FX. PSI is a plastocyanin-ferredoxin oxidoreductase, converting photonic excitation into a charge separation, which transfers an electron from the donor P700 chlorophyll pair to the spectroscopically characterized acceptors A0, A1, FX, FA and FB in turn. Oxidized P700 is reduced on the lumenal side of the thylakoid membrane by plastocyanin. The chain is Photosystem I P700 chlorophyll a apoprotein A1 from Torreya californica (California nutmeg).